We begin with the raw amino-acid sequence, 150 residues long: Small ribosomal subunit protein uS11x (150 aa).

Belongs to the universal ribosomal protein uS11 family.

The protein localises to the cytoplasm. In Arabidopsis thaliana (Mouse-ear cress), this protein is Small ribosomal subunit protein uS11x (RPS14C).